A 600-amino-acid chain; its full sequence is Arginine--tRNA ligase (600 aa).

Residues Pro-123 to His-133 carry the 'HIGH' region motif.

This sequence belongs to the class-I aminoacyl-tRNA synthetase family. As to quaternary structure, monomer.

The protein resides in the cytoplasm. The enzyme catalyses tRNA(Arg) + L-arginine + ATP = L-arginyl-tRNA(Arg) + AMP + diphosphate. The polypeptide is Arginine--tRNA ligase (Caulobacter vibrioides (strain NA1000 / CB15N) (Caulobacter crescentus)).